We begin with the raw amino-acid sequence, 584 residues long: Interferon regulatory factor 2-binding protein 1 (584 aa).

The disordered stretch occupies residues His59–Arg120. Ser66 bears the Phosphoserine mark. A compositionally biased stretch (low complexity) spans Ser82–Ser100. Ser125 bears the Phosphoserine mark. Position 177 is an omega-N-methylarginine (Arg177). Residue Ser186 is modified to Phosphoserine. Residues Glu197–Gly217 are a coiled coil. Residue Lys227 forms a Glycyl lysine isopeptide (Lys-Gly) (interchain with G-Cter in SUMO2) linkage. Disordered regions lie at residues Pro346 to Ser421 and Leu433 to Ala495. Residues Tyr354 to Ala369 are compositionally biased toward pro residues. Phosphoserine occurs at positions 371, 384, 421, and 436. Residue Lys438 forms a Glycyl lysine isopeptide (Lys-Gly) (interchain with G-Cter in SUMO2) linkage. The segment covering Ala449–Ser458 has biased composition (low complexity). Ser453 and Ser457 each carry phosphoserine. The segment at Cys503–Asp550 adopts an RING-type; degenerate zinc-finger fold. Residues Cys503 to Asp550 form a cys-rich region.

This sequence belongs to the IRF2BP family. As to quaternary structure, interacts with IRF2. Part of a corepressor complex containing IRF2 and IRF2BP2. Interacts with JDP2.

It is found in the nucleus. It carries out the reaction S-ubiquitinyl-[E2 ubiquitin-conjugating enzyme]-L-cysteine + [acceptor protein]-L-lysine = [E2 ubiquitin-conjugating enzyme]-L-cysteine + N(6)-ubiquitinyl-[acceptor protein]-L-lysine.. Functionally, acts as a transcriptional corepressor in a IRF2-dependent manner; this repression is not mediated by histone deacetylase activities. May act as an E3 ligase towards JDP2, enhancing its polyubiquitination. Represses ATF2-dependent transcriptional activation. The polypeptide is Interferon regulatory factor 2-binding protein 1 (Irf2bp1) (Mus musculus (Mouse)).